The primary structure comprises 131 residues: MSNRERPVKPYDLTVSVTPRYVPEQSDPSQQQYVFAYTVRITNTGSHPAQVISRHWIITDGEERVQEVRGLGVVGQQPLLAPGETFEYTSGCPLPTPIGTMRGTYHCVGENGIPFEVPIAEFLLAMPRTLH.

The 125-residue stretch at 7–131 folds into the ApaG domain; it reads PVKPYDLTVS…FLLAMPRTLH (125 aa).

This Bordetella bronchiseptica (strain ATCC BAA-588 / NCTC 13252 / RB50) (Alcaligenes bronchisepticus) protein is Protein ApaG.